A 519-amino-acid chain; its full sequence is Protein disulfide-isomerase A5 (519 aa).

The first 21 residues, 1 to 21, serve as a signal peptide directing secretion; the sequence is MARAGPAWLLLAIWVVLPSWL. Cystine bridges form between cysteine 85-cysteine 94, cysteine 182-cysteine 185, cysteine 305-cysteine 308, and cysteine 426-cysteine 429. Thioredoxin domains are found at residues 134–261, 270–384, and 378–506; these read FLKD…NPQP, PWAD…NPEA, and WMQN…ALRE. The Prevents secretion from ER signature appears at 516–519; the sequence is KEEL.

Belongs to the protein disulfide isomerase family. In terms of assembly, interacts with CALR (via P-domain).

Its subcellular location is the endoplasmic reticulum lumen. It carries out the reaction Catalyzes the rearrangement of -S-S- bonds in proteins.. This is Protein disulfide-isomerase A5 (PDIA5) from Homo sapiens (Human).